The chain runs to 173 residues: DASH complex subunit SPC19 (173 aa).

The protein belongs to the DASH complex SPC19 family. As to quaternary structure, component of the DASH complex consisting of ASK1, DAD1, DAD2, DAD3, DAD4, DAM1, DUO1, HSK3, SPC19 and SPC34, with a stoichiometry of one copy of each subunit per complex. Multiple DASH complexes oligomerize to form a ring that encircles spindle microtubules and organizes the rod-like NDC80 complexes of the outer kinetochore. DASH complex oligomerization strengthens microtubule attachments. On cytoplasmic microtubules, DASH complexes appear to form patches instead of rings.

It localises to the nucleus. The protein resides in the cytoplasm. The protein localises to the cytoskeleton. Its subcellular location is the spindle. It is found in the chromosome. It localises to the centromere. The protein resides in the kinetochore. In terms of biological role, component of the DASH complex that connects microtubules with kinetochores and couples microtubule depolymerisation to chromosome movement; it is involved in retrieving kinetochores to the spindle poles before their re-orientation on the spindle in early mitosis and allows microtubule depolymerization to pull chromosomes apart and resist detachment during anaphase. Kinetochores, consisting of a centromere-associated inner segment and a microtubule-contacting outer segment, play a crucial role in chromosome segregation by mediating the physical connection between centromeric DNA and microtubules. Kinetochores also serve as an input point for the spindle assembly checkpoint, which delays anaphase until all chromosomes have bioriented on the mitotic spindle. This chain is DASH complex subunit SPC19, found in Chaetomium thermophilum (strain DSM 1495 / CBS 144.50 / IMI 039719) (Thermochaetoides thermophila).